The following is a 218-amino-acid chain: MQKTSILILALFAIAEAVPTTGPIRVRRQVLGGSLASNPAGGADARLNLSKGIGNPNHNVVGQVFAAGNTQSGPVTTGGTLAYNNAGHGASLTKTHTPGVKDVFQQEAHANLFNNGRHNLDAKVFASQNKLANGFEFQRNGAGLDYSHINGHGASLTHSNFPGIGQQLGLDGRANLWSSPNRATTLDLTGSASKWTSGPFANQKPNFGAGLGLSHHFG.

The first 17 residues, 1 to 17 (MQKTSILILALFAIAEA), serve as a signal peptide directing secretion. A propeptide spanning residues 18–28 (VPTTGPIRVRR) is cleaved from the precursor.

It belongs to the attacin/sarcotoxin-2 family. As to expression, hemolymph (at protein level).

It localises to the secreted. Functionally, hemolymph antibacterial protein. This is Attacin-B (AttB) from Drosophila melanogaster (Fruit fly).